Reading from the N-terminus, the 590-residue chain is Protein ecdysoneless homolog (590 aa).

The interval 445–464 (EDFYGVKNSDTDTDSDSLAD) is disordered. A compositionally biased stretch (acidic residues) spans 455–464 (TDTDSDSLAD).

The protein belongs to the ECD family.

It is found in the cytoplasm. The protein resides in the nucleus. Functionally, involved in the regulation of carbohydrate metabolism. May act as a transcription factor. The chain is Protein ecdysoneless homolog from Schizosaccharomyces pombe (strain 972 / ATCC 24843) (Fission yeast).